Reading from the N-terminus, the 317-residue chain is Protein CbxX, plasmid (317 aa).

85–92 (GNPGTGKT) serves as a coordination point for ATP.

The protein belongs to the CbxX/CfxQ family.

Its function is as follows. Seems to be necessary for the expression of RuBisCO. The polypeptide is Protein CbxX, plasmid (cbxXP) (Cupriavidus necator (strain ATCC 17699 / DSM 428 / KCTC 22496 / NCIMB 10442 / H16 / Stanier 337) (Ralstonia eutropha)).